The chain runs to 456 residues: Gamma-aminobutyric acid receptor subunit alpha-1 (456 aa).

An N-terminal signal peptide occupies residues 1–27 (MRKSPGLSDCLWAWILLLSTLTGRSYG). The Extracellular segment spans residues 28-253 (QPSLQDELKD…FHLKRKIGYF (226 aa)). An N-linked (GlcNAc...) asparagine glycan is attached at asparagine 38. Arginine 94 provides a ligand contact to 4-aminobutanoate. N-linked (GlcNAc...) asparagine glycosylation is present at asparagine 138. Position 157 (threonine 157) interacts with 4-aminobutanoate. Cysteine 166 and cysteine 180 are joined by a disulfide. Residues 254-274 (VIQTYLPCIMTVILSQVSFWL) form a helical membrane-spanning segment. Residues 275–279 (NRESV) lie on the Cytoplasmic side of the membrane. Residues 280–301 (PARTVFGVTTVLTMTTLSISAR) traverse the membrane as a helical segment. At 302–311 (NSLPKVAYAT) the chain is on the extracellular side. Residues 312–333 (AMDWFIAVCYAFVFSALIEFAT) traverse the membrane as a helical segment. The Cytoplasmic portion of the chain corresponds to 334–421 (VNYFTKRGYA…TFNSVSKIDR (88 aa)). The helical transmembrane segment at 422-441 (LSRIAFPLLFGIFNLIYWAT) threads the bilayer. Residues 442 to 456 (YLNREPQLKAPTPHQ) lie on the Extracellular side of the membrane.

Belongs to the ligand-gated ion channel (TC 1.A.9) family. Gamma-aminobutyric acid receptor (TC 1.A.9.5) subfamily. GABRA1 sub-subfamily. As to quaternary structure, heteropentamer, formed by a combination of alpha (GABRA1-6), beta (GABRB1-3), gamma (GABRG1-3), delta (GABRD), epsilon (GABRE), rho (GABRR1-3), pi (GABRP) and theta (GABRQ) subunits, each subunit exhibiting distinct physiological and pharmacological properties. Interacts with UBQLN1. Interacts with TRAK1. Interacts with KIF21B. Identified in a complex of 720 kDa composed of LHFPL4, NLGN2, GABRA1, GABRB2, GABRG2 and GABRB3. Interacts with LHFPL4. Interacts with NLGN2. Interacts with SHISA7; interaction leads to the regulation of GABA(A) receptor trafficking, channel deactivation kinetics and pharmacology.

The protein localises to the postsynaptic cell membrane. It localises to the cell membrane. The protein resides in the cytoplasmic vesicle membrane. The enzyme catalyses chloride(in) = chloride(out). Its activity is regulated as follows. Allosterically activated by benzodiazepines, the neuroanesthetic alphaxalone and pentobarbital. Inhibited by the antagonist bicuculline. Potentiated by histamine. Alpha subunit of the heteropentameric ligand-gated chloride channel gated by gamma-aminobutyric acid (GABA), a major inhibitory neurotransmitter in the brain. GABA-gated chloride channels, also named GABA(A) receptors (GABAAR), consist of five subunits arranged around a central pore and contain GABA active binding site(s) located at the alpha and beta subunit interface(s). When activated by GABA, GABAARs selectively allow the flow of chloride anions across the cell membrane down their electrochemical gradient. Alpha-1/GABRA1-containing GABAARs are largely synaptic. Chloride influx into the postsynaptic neuron following GABAAR opening decreases the neuron ability to generate a new action potential, thereby reducing nerve transmission. GABAARs containing alpha-1 and beta-2 or -3 subunits exhibit synaptogenic activity; the gamma-2 subunit being necessary but not sufficient to induce rapid synaptic contacts formation. GABAARs function also as histamine receptor where histamine binds at the interface of two neighboring beta subunits and potentiates GABA response. GABAARs containing alpha, beta and epsilon subunits also permit spontaneous chloride channel activity while preserving the structural information required for GABA-gated openings. Alpha-1-mediated plasticity in the orbitofrontal cortex regulates context-dependent action selection. Together with rho subunits, may also control neuronal and glial GABAergic transmission in the cerebellum. In Pongo abelii (Sumatran orangutan), this protein is Gamma-aminobutyric acid receptor subunit alpha-1 (GABRA1).